The sequence spans 305 residues: Ornithine carbamoyltransferase (305 aa).

Residues 52–55 (STRT), Q79, R103, and 130–133 (HPLQ) contribute to the carbamoyl phosphate site. L-ornithine contacts are provided by residues N162, D224, and 228-229 (SM). Carbamoyl phosphate-binding positions include 264 to 265 (CL) and R292.

The protein belongs to the aspartate/ornithine carbamoyltransferase superfamily. OTCase family.

The protein localises to the cytoplasm. The enzyme catalyses carbamoyl phosphate + L-ornithine = L-citrulline + phosphate + H(+). It participates in amino-acid biosynthesis; L-arginine biosynthesis; L-arginine from L-ornithine and carbamoyl phosphate: step 1/3. Its function is as follows. Reversibly catalyzes the transfer of the carbamoyl group from carbamoyl phosphate (CP) to the N(epsilon) atom of ornithine (ORN) to produce L-citrulline. The protein is Ornithine carbamoyltransferase of Pyrobaculum islandicum (strain DSM 4184 / JCM 9189 / GEO3).